The following is a 269-amino-acid chain: Protein-L-isoaspartate O-methyltransferase (269 aa).

A disordered region spans residues 1-53; the sequence is MSAGQRPAPKFPLRLDQVKPAGRSGAAPLLRPQRPLHQAATERGRGTTPAGLG. The active site involves serine 113.

Belongs to the methyltransferase superfamily. L-isoaspartyl/D-aspartyl protein methyltransferase family.

The protein resides in the cytoplasm. It catalyses the reaction [protein]-L-isoaspartate + S-adenosyl-L-methionine = [protein]-L-isoaspartate alpha-methyl ester + S-adenosyl-L-homocysteine. Functionally, catalyzes the methyl esterification of L-isoaspartyl residues in peptides and proteins that result from spontaneous decomposition of normal L-aspartyl and L-asparaginyl residues. It plays a role in the repair and/or degradation of damaged proteins. This chain is Protein-L-isoaspartate O-methyltransferase, found in Methylibium petroleiphilum (strain ATCC BAA-1232 / LMG 22953 / PM1).